A 176-amino-acid chain; its full sequence is Ribosome maturation factor RimM (176 aa).

Residues 93-172 (KDEFFYFDII…KIQVKNSLDI (80 aa)) form the PRC barrel domain.

It belongs to the RimM family. Binds ribosomal protein uS19.

It is found in the cytoplasm. In terms of biological role, an accessory protein needed during the final step in the assembly of 30S ribosomal subunit, possibly for assembly of the head region. Essential for efficient processing of 16S rRNA. May be needed both before and after RbfA during the maturation of 16S rRNA. It has affinity for free ribosomal 30S subunits but not for 70S ribosomes. The polypeptide is Ribosome maturation factor RimM (Campylobacter fetus subsp. fetus (strain 82-40)).